Reading from the N-terminus, the 340-residue chain is Deubiquitinase SseL (340 aa).

The active site involves His-223. Catalysis depends on Cys-285, which acts as the Nucleophile.

The protein belongs to the peptidase C79 family.

The protein resides in the secreted. It localises to the host cytoplasm. Its function is as follows. Effector proteins function to alter host cell physiology and promote bacterial survival in host tissues. This protease targets the host cell ubiquitin pathway by acting as a deubiquitinase in infected host cells. The protein is Deubiquitinase SseL (sseL) of Salmonella paratyphi A (strain ATCC 9150 / SARB42).